The primary structure comprises 463 residues: Putative pentatricopeptide repeat-containing protein At4g17915 (463 aa).

12 PPR repeats span residues 12–46 (STRLLNICVDSLCKFRKLEKAESLIIDGIRLGVDP), 47–81 (DVVTYNTLISGYCRFVGIEEAYAVTRRMRDAGIRP), 82–116 (DVATYNSLIAGAARRLMLDHVLYLFDEMLEWGIYP), 117–152 (DLWSYNTLMCCYFKLGKHEEAFRVLYKDLQLAGLNP), 153–186 (GPDTYNVLLDALCKCGYIDNALELFKEMQSRFKP), 187–221 (ELMTYNILINGLCKSRRVGTAKWMLTELKKSGYTP), 222–256 (NAVTYTTILKLYFKTRRIRRGLQLFLEMKREGYTY), 257–291 (DGYAYFAVVSALIKTGRTKEAYEYMQELVRKGRRH), 292–326 (DIVSYNTLLNLYFKDGNLDAVDDLLGEIERRGMKA), 327–361 (DEYTHTIIVNGLLRTGQTRRAEEHFVSMGEMGIGL), 362–392 (NLVTCNCLVDGLCKAGHVDRAMRYFESMEVK), and 393–427 (DEYTYTSVVHNLCKDMRFVCASKLLLSCYNKGIKI).

This sequence belongs to the PPR family. P subfamily.

The protein is Putative pentatricopeptide repeat-containing protein At4g17915 of Arabidopsis thaliana (Mouse-ear cress).